Reading from the N-terminus, the 253-residue chain is Triosephosphate isomerase (253 aa).

A substrate-binding site is contributed by 8–10 (NWK). Residue H93 is the Electrophile of the active site. The Proton acceptor role is filled by E165. Substrate-binding positions include G171, S210, and 231 to 232 (GG).

Belongs to the triosephosphate isomerase family. As to quaternary structure, homodimer.

It is found in the cytoplasm. The enzyme catalyses D-glyceraldehyde 3-phosphate = dihydroxyacetone phosphate. The protein operates within carbohydrate biosynthesis; gluconeogenesis. It participates in carbohydrate degradation; glycolysis; D-glyceraldehyde 3-phosphate from glycerone phosphate: step 1/1. In terms of biological role, involved in the gluconeogenesis. Catalyzes stereospecifically the conversion of dihydroxyacetone phosphate (DHAP) to D-glyceraldehyde-3-phosphate (G3P). The sequence is that of Triosephosphate isomerase from Francisella tularensis subsp. mediasiatica (strain FSC147).